A 215-amino-acid polypeptide reads, in one-letter code: Cytochrome b6 (215 aa).

A helical membrane pass occupies residues 32–52 (IFYCLGGITFTLFLVQVATGF). Cys35 contacts heme c. His86 and His100 together coordinate heme b. 3 helical membrane-spanning segments follow: residues 90 to 110 (ASMM…TGGF), 116 to 136 (LTWI…VTGY), and 186 to 206 (LHTF…FLMI). His187 and His202 together coordinate heme b.

It belongs to the cytochrome b family. PetB subfamily. In terms of assembly, the 4 large subunits of the cytochrome b6-f complex are cytochrome b6, subunit IV (17 kDa polypeptide, PetD), cytochrome f and the Rieske protein, while the 4 small subunits are PetG, PetL, PetM and PetN. The complex functions as a dimer. Heme b is required as a cofactor. The cofactor is heme c.

It is found in the plastid. It localises to the chloroplast thylakoid membrane. Component of the cytochrome b6-f complex, which mediates electron transfer between photosystem II (PSII) and photosystem I (PSI), cyclic electron flow around PSI, and state transitions. This is Cytochrome b6 from Tupiella akineta (Green alga).